The following is a 431-amino-acid chain: Histidinol dehydrogenase (431 aa).

The NAD(+) site is built by Tyr-124, Gln-187, and Asn-210. Substrate is bound by residues Ser-236, Gln-258, and His-261. Gln-258 and His-261 together coordinate Zn(2+). Active-site proton acceptor residues include Glu-325 and His-326. The substrate site is built by His-326, Asp-359, Glu-413, and His-418. Position 359 (Asp-359) interacts with Zn(2+). His-418 contributes to the Zn(2+) binding site.

This sequence belongs to the histidinol dehydrogenase family. The cofactor is Zn(2+).

It carries out the reaction L-histidinol + 2 NAD(+) + H2O = L-histidine + 2 NADH + 3 H(+). It participates in amino-acid biosynthesis; L-histidine biosynthesis; L-histidine from 5-phospho-alpha-D-ribose 1-diphosphate: step 9/9. Its function is as follows. Catalyzes the sequential NAD-dependent oxidations of L-histidinol to L-histidinaldehyde and then to L-histidine. The sequence is that of Histidinol dehydrogenase from Legionella pneumophila (strain Paris).